Consider the following 312-residue polypeptide: MTTNRLQVSLPGLDLKNPIIPASGCFGFGQEYAKYYDLNLLGSIMIKATTLEPRFGNPTPRVAETPAGMLNAIGLQNPGLEVVLAEKLPWLEREYPNLPIIANVAGFSKQEYAAVSHGISKATNVKAIELNISCPNVDHCNHGLLIGQDPDLAYDVVKAAVEASEVPVYVKLTPSVTDIVTVAKAAEDAGASGLTMINTLVGMRFDLKTRKPILANGTGGMSGPAVFPVALKLIRQVAQTTDLPIIGMGGVDSTEAALEMYLAGASAIGVGTANFTNPYACPDIIENLPKVMDKYGISSLEELRQEVKESLR.

Residues serine 23 and 47–48 (KA) each bind FMN. Residues lysine 47 and 71 to 75 (NAIGL) each bind substrate. 2 residues coordinate FMN: asparagine 103 and asparagine 131. Asparagine 131 is a substrate binding site. The active-site Nucleophile is cysteine 134. Residues lysine 171 and isoleucine 197 each contribute to the FMN site. 198-199 (NT) serves as a coordination point for substrate. FMN is bound by residues glycine 223, 249–250 (GG), and 271–272 (GT).

It belongs to the dihydroorotate dehydrogenase family. Type 1 subfamily. In terms of assembly, heterotetramer of 2 PyrK and 2 PyrD type B subunits. Requires FMN as cofactor.

It is found in the cytoplasm. The enzyme catalyses (S)-dihydroorotate + NAD(+) = orotate + NADH + H(+). It functions in the pathway pyrimidine metabolism; UMP biosynthesis via de novo pathway; orotate from (S)-dihydroorotate (NAD(+) route): step 1/1. In terms of biological role, catalyzes the conversion of dihydroorotate to orotate with NAD(+) as electron acceptor. This Streptococcus pneumoniae (strain ATCC BAA-255 / R6) protein is Dihydroorotate dehydrogenase B (NAD(+)), catalytic subunit (pyrDB).